The chain runs to 292 residues: 4-hydroxy-tetrahydrodipicolinate synthase (292 aa).

Threonine 45 is a pyruvate binding site. Tyrosine 133 acts as the Proton donor/acceptor in catalysis. Residue lysine 161 is the Schiff-base intermediate with substrate of the active site. Pyruvate is bound at residue isoleucine 203.

The protein belongs to the DapA family. As to quaternary structure, homotetramer; dimer of dimers.

It is found in the cytoplasm. The catalysed reaction is L-aspartate 4-semialdehyde + pyruvate = (2S,4S)-4-hydroxy-2,3,4,5-tetrahydrodipicolinate + H2O + H(+). It functions in the pathway amino-acid biosynthesis; L-lysine biosynthesis via DAP pathway; (S)-tetrahydrodipicolinate from L-aspartate: step 3/4. Functionally, catalyzes the condensation of (S)-aspartate-beta-semialdehyde [(S)-ASA] and pyruvate to 4-hydroxy-tetrahydrodipicolinate (HTPA). This is 4-hydroxy-tetrahydrodipicolinate synthase from Vibrio cholerae serotype O1 (strain M66-2).